Consider the following 350-residue polypeptide: Phosphoribosylformylglycinamidine cyclo-ligase (350 aa).

The protein belongs to the AIR synthase family.

Its subcellular location is the cytoplasm. The catalysed reaction is 2-formamido-N(1)-(5-O-phospho-beta-D-ribosyl)acetamidine + ATP = 5-amino-1-(5-phospho-beta-D-ribosyl)imidazole + ADP + phosphate + H(+). It participates in purine metabolism; IMP biosynthesis via de novo pathway; 5-amino-1-(5-phospho-D-ribosyl)imidazole from N(2)-formyl-N(1)-(5-phospho-D-ribosyl)glycinamide: step 2/2. This chain is Phosphoribosylformylglycinamidine cyclo-ligase, found in Cupriavidus pinatubonensis (strain JMP 134 / LMG 1197) (Cupriavidus necator (strain JMP 134)).